Here is a 288-residue protein sequence, read N- to C-terminus: 33 kDa chaperonin (288 aa).

Cystine bridges form between C237-C239 and C270-C273.

The protein belongs to the HSP33 family. Post-translationally, under oxidizing conditions two disulfide bonds are formed involving the reactive cysteines. Under reducing conditions zinc is bound to the reactive cysteines and the protein is inactive.

The protein localises to the cytoplasm. Functionally, redox regulated molecular chaperone. Protects both thermally unfolding and oxidatively damaged proteins from irreversible aggregation. Plays an important role in the bacterial defense system toward oxidative stress. The chain is 33 kDa chaperonin from Agathobacter rectalis (strain ATCC 33656 / DSM 3377 / JCM 17463 / KCTC 5835 / VPI 0990) (Eubacterium rectale).